A 416-amino-acid polypeptide reads, in one-letter code: Serine hydroxymethyltransferase (416 aa).

Residues leucine 121 and 125 to 127 (GHL) each bind (6S)-5,6,7,8-tetrahydrofolate. An N6-(pyridoxal phosphate)lysine modification is found at lysine 229. Residues glutamate 245 and 354 to 356 (SPF) contribute to the (6S)-5,6,7,8-tetrahydrofolate site.

The protein belongs to the SHMT family. Homodimer. It depends on pyridoxal 5'-phosphate as a cofactor.

It localises to the cytoplasm. The catalysed reaction is (6R)-5,10-methylene-5,6,7,8-tetrahydrofolate + glycine + H2O = (6S)-5,6,7,8-tetrahydrofolate + L-serine. It functions in the pathway one-carbon metabolism; tetrahydrofolate interconversion. The protein operates within amino-acid biosynthesis; glycine biosynthesis; glycine from L-serine: step 1/1. In terms of biological role, catalyzes the reversible interconversion of serine and glycine with tetrahydrofolate (THF) serving as the one-carbon carrier. This reaction serves as the major source of one-carbon groups required for the biosynthesis of purines, thymidylate, methionine, and other important biomolecules. Also exhibits THF-independent aldolase activity toward beta-hydroxyamino acids, producing glycine and aldehydes, via a retro-aldol mechanism. In Aliivibrio salmonicida (strain LFI1238) (Vibrio salmonicida (strain LFI1238)), this protein is Serine hydroxymethyltransferase.